Reading from the N-terminus, the 218-residue chain is Ras-related protein Rab-4A (218 aa).

Residues Gly23, Thr24, Gly25, Lys26, Ser27, Cys28, Ser42, His44, and Thr45 each coordinate GTP. Ser27 is a binding site for Mg(2+). A Switch 1 motif is present at residues 44–49; it reads HTIGVE. 2 residues coordinate Mg(2+): Thr45 and Asp68. A Switch 2 motif is present at residues 70–79; it reads AGQERFRSVT. Gly71 contributes to the GTP binding site. Gln72 carries the post-translational modification 5-glutamyl serotonin. Residues Asn126, Lys127, Asp129, Ala157, and Leu158 each contribute to the GTP site. Ser190 is modified (phosphoserine). The residue at position 204 (Ser204) is a Phosphoserine; by CDK1. Residues Cys216 and Cys218 are each lipidated (S-geranylgeranyl cysteine). Position 218 is a cysteine methyl ester (Cys218).

Belongs to the small GTPase superfamily. Rab family. In terms of assembly, interacts with RAB11FIP1, RABEP1, ZFYVE20 and RUFY1. Interacts with SGSM1, SGSM2 and SGSM3. Interacts (membrane-bound form) with NDRG1; the interaction involves NDRG1 in vesicular recycling of E-cadherin. Interacts (in GTP-bound form) with GRIPAP1. Interacts with RABEP1 and RBSN. Does not interact with HPS4. The cofactor is Mg(2+). Post-translationally, serotonylation of Gln-72 by TGM2 during activation and aggregation of platelets leads to constitutive activation of GTPase activity. In terms of processing, phosphorylated by CDK1 kinase during mitosis.

The protein resides in the membrane. Its subcellular location is the cytoplasm. The protein localises to the early endosome membrane. It localises to the recycling endosome membrane. The enzyme catalyses GTP + H2O = GDP + phosphate + H(+). With respect to regulation, regulated by guanine nucleotide exchange factors (GEFs) which promote the exchange of bound GDP for free GTP. Regulated by GTPase activating proteins (GAPs) which increase the GTP hydrolysis activity. Inhibited by GDP dissociation inhibitors (GDIs). The small GTPases Rab are key regulators of intracellular membrane trafficking, from the formation of transport vesicles to their fusion with membranes. Rabs cycle between an inactive GDP-bound form and an active GTP-bound form that is able to recruit to membranes different sets of downstream effectors directly responsible for vesicle formation, movement, tethering and fusion. RAB4A is involved in protein transport. Also plays a role in vesicular traffic. Mediates VEGFR2 endosomal trafficking to enhance VEGFR2 signaling. Acts as a regulator of platelet alpha-granule release during activation and aggregation of platelets. The chain is Ras-related protein Rab-4A (RAB4A) from Bos taurus (Bovine).